We begin with the raw amino-acid sequence, 199 residues long: Transcription regulator complex subunit bur6 (199 aa).

A disordered region spans residues 106–199 (PPIKAERKTK…SEASSASGDE (94 aa)). Residues 112–121 (RKTKRPRARR) show a composition bias toward basic residues. Polar residues predominate over residues 185–199 (SDKTTSEASSASGDE).

Belongs to the NC2 alpha/DRAP1 family.

Its subcellular location is the nucleus. Transcription regulator complex subunit that is essential for cell cycle progression. The protein is Transcription regulator complex subunit bur6 of Schizosaccharomyces pombe (strain 972 / ATCC 24843) (Fission yeast).